Reading from the N-terminus, the 343-residue chain is L-threonine 3-dehydrogenase (343 aa).

C40 lines the Zn(2+) pocket. Residues T42 and H45 each act as charge relay system in the active site. Zn(2+)-binding residues include H65, E66, C95, C98, C101, and C109. NAD(+)-binding positions include I177, D197, R202, 264-266 (LGI), and 288-289 (IY).

This sequence belongs to the zinc-containing alcohol dehydrogenase family. In terms of assembly, homotetramer. It depends on Zn(2+) as a cofactor.

Its subcellular location is the cytoplasm. It carries out the reaction L-threonine + NAD(+) = (2S)-2-amino-3-oxobutanoate + NADH + H(+). Its pathway is amino-acid degradation; L-threonine degradation via oxydo-reductase pathway; glycine from L-threonine: step 1/2. Catalyzes the NAD(+)-dependent oxidation of L-threonine to 2-amino-3-ketobutyrate. This is L-threonine 3-dehydrogenase from Aliivibrio salmonicida (strain LFI1238) (Vibrio salmonicida (strain LFI1238)).